Here is an 86-residue protein sequence, read N- to C-terminus: RNA-binding protein Hfq (86 aa).

Residues 9 to 68 (DPYLNTLRKEKVPVSIYLVNGIKLQGSIESFDQFVVLLKNTVSQMVYKHAISTVVPARPV) enclose the Sm domain. The tract at residues 66-86 (RPVRLPSPSDSEHGDSEPGNA) is disordered. Over residues 75 to 86 (DSEHGDSEPGNA) the composition is skewed to basic and acidic residues.

It belongs to the Hfq family. In terms of assembly, homohexamer.

In terms of biological role, RNA chaperone that binds small regulatory RNA (sRNAs) and mRNAs to facilitate mRNA translational regulation in response to envelope stress, environmental stress and changes in metabolite concentrations. Also binds with high specificity to tRNAs. The protein is RNA-binding protein Hfq of Pseudomonas putida (strain W619).